The sequence spans 215 residues: Nitrate/nitrite response regulator protein NarP (215 aa).

A Response regulatory domain is found at 8 to 124 (QVMIVDDHPL…VLLEAIRAGA (117 aa)). At Asp-59 the chain carries 4-aspartylphosphate. Residues 147–212 (EEDPFSVLTE…AATILFLQQR (66 aa)) form the HTH luxR-type domain. A DNA-binding region (H-T-H motif) is located at residues 171 to 190 (NKQIASVLNISEQTVKVHIR).

Its function is as follows. This protein activates the expression of the nitrate reductase (narGHJI) and formate dehydrogenase-N (fdnGHI) operons and represses the transcription of the fumarate reductase (frdABCD) operon in response to a nitrate/nitrite induction signal transmitted by either the NarX or NarQ proteins. The sequence is that of Nitrate/nitrite response regulator protein NarP (narP) from Escherichia coli (strain K12).